Here is a 208-residue protein sequence, read N- to C-terminus: MIDNTKIRSLLEEGLTVFQLDSIGDLLLDFLLLLNKWNKTYNLTAIRDIETMVSKHLFDSLAILPWIKGNHIIDVGTGPGLPGIPLAIAKPDLQFVLLDSNGKKISFLNEVKRQLNIKNIEPIQIRVENYHPNQGFDTVISRAFSSLEQMIKWTQHLVAQDGLWLAMKGRFPDTELVPIHQTYRVERYAVPGIEGERCCVLINNTNKE.

S-adenosyl-L-methionine contacts are provided by residues G76, L81, 127 to 128 (VE), and R142.

The protein belongs to the methyltransferase superfamily. RNA methyltransferase RsmG family.

Its subcellular location is the cytoplasm. The enzyme catalyses guanosine(527) in 16S rRNA + S-adenosyl-L-methionine = N(7)-methylguanosine(527) in 16S rRNA + S-adenosyl-L-homocysteine. Its function is as follows. Specifically methylates the N7 position of guanine in position 527 of 16S rRNA. The sequence is that of Ribosomal RNA small subunit methyltransferase G from Legionella pneumophila (strain Lens).